A 273-amino-acid polypeptide reads, in one-letter code: Putative deoxyribonuclease TATDN1 homolog (273 aa).

A divalent metal cation is bound by residues E91, H125, H147, and D195.

Belongs to the metallo-dependent hydrolases superfamily. TatD-type hydrolase family. Requires a divalent metal cation as cofactor.

It is found in the nucleus. In terms of biological role, putative deoxyribonuclease. The polypeptide is Putative deoxyribonuclease TATDN1 homolog (Encephalitozoon cuniculi (strain GB-M1) (Microsporidian parasite)).